We begin with the raw amino-acid sequence, 22 residues long: Major outer membrane protein (22 aa).

This sequence belongs to the Gram-negative porin family. As to quaternary structure, disulfide bond interactions within and between MOMP molecules and other components form high molecular-weight oligomers.

Its subcellular location is the cell outer membrane. Structural rigidity of the outer membrane of elementary bodies and porin forming, permitting diffusion of solutes through the intracellular reticulate body membrane. The polypeptide is Major outer membrane protein (ompH) (Avibacterium gallinarum (Pasteurella gallinarum)).